A 237-amino-acid chain; its full sequence is Uridylate kinase (237 aa).

11–14 provides a ligand contact to ATP; the sequence is KLSG. G53 is a UMP binding site. ATP is bound by residues G54 and R58. Residues D73 and 134-141 each bind UMP; that span reads TGNPFFTT. ATP contacts are provided by T161, Y167, and D170.

It belongs to the UMP kinase family. In terms of assembly, homohexamer.

It is found in the cytoplasm. It carries out the reaction UMP + ATP = UDP + ADP. It participates in pyrimidine metabolism; CTP biosynthesis via de novo pathway; UDP from UMP (UMPK route): step 1/1. Its activity is regulated as follows. Inhibited by UTP. In terms of biological role, catalyzes the reversible phosphorylation of UMP to UDP. This Burkholderia cenocepacia (strain HI2424) protein is Uridylate kinase.